Reading from the N-terminus, the 317-residue chain is Lipopolysaccharide heptosyltransferase 1 (317 aa).

9 residues coordinate ADP-L-glycero-beta-D-manno-heptose: T187, T188, K192, E222, M242, D261, T262, G263, and H266.

This sequence belongs to the glycosyltransferase 9 family.

The protein resides in the cell inner membrane. It catalyses the reaction an alpha-Kdo-(2-&gt;4)-alpha-Kdo-(2-&gt;6)-lipid A + ADP-L-glycero-beta-D-manno-heptose = an L-alpha-D-Hep-(1-&gt;5)-[alpha-Kdo-(2-&gt;4)]-alpha-Kdo-(2-&gt;6)-lipid A + ADP + H(+). It participates in bacterial outer membrane biogenesis; LPS core biosynthesis. Its function is as follows. Glycosyltransferase involved in the biosynthesis of the core oligosaccharide region of lipopolysaccharide (LPS). Catalyzes the addition of the first heptose unit to one 3-deoxy-D-manno-octulosonic acid (Kdo) residue of the Kdo2-lipid A module. The protein is Lipopolysaccharide heptosyltransferase 1 of Salmonella typhimurium (strain LT2 / SGSC1412 / ATCC 700720).